The following is a 65-amino-acid chain: Large ribosomal subunit protein bL35 (65 aa).

The disordered stretch occupies residues 1-52 (MPKIKTNRGAAKRFKRTGSGGFKCVQSHRRHILTKKSTKRKRQLRSPDMVHP). Basic residues predominate over residues 26 to 44 (QSHRRHILTKKSTKRKRQL).

The protein belongs to the bacterial ribosomal protein bL35 family.

The polypeptide is Large ribosomal subunit protein bL35 (Methylococcus capsulatus (strain ATCC 33009 / NCIMB 11132 / Bath)).